A 576-amino-acid chain; its full sequence is MNKEALKRLIAVAAGREEPDLVIKNAKVVDVFNARVIQGDIAIVDGLIAGVGDYSCKNELDAEGQYAAPGFIDSHIHIESSYVSPEELGRLLVPHGTTTIIADPHEIANVCGLKGLDYMIEAAKRTALDVQMMLPSCVPATPFEHSGANIDAREMEKPITYDEVLGLGEFMDFPGVINGVDATIEKLLVAKRAGKPIDGHSPGVSGNALNAYASARIGTDHECATVEEMHERIARGMYVLLRQGSACYNLRTLLKGVTPVNSRRCLFCADDCQPKTILSLGHLDNHLRICAEEGIDPIMAIQMATINAAECFGLKDRGAIAPGLKADIVLMDSLTNCRVEKVWIDGVLIADSGKYLPEIKRHDISSTKGNFKVKDFSVKKLKLAIQSPQAHVINILPGGVVTSKEVVAINRNSDNEFVYGHGQDVVKIAVVERHQNTGNVAVALLQGYGIKRGAIALSVAHDSHNIIVVGVDDTDMACAVEALIAQDGGIVLVNGEEVVESMPMPIAGLMSDQCGEWVEAKLTSIHSKAHEVLGVNADVEPVMTLCFMSLAVIPEIKLTDMGLFDVTKFDFISLEA.

The protein belongs to the metallo-dependent hydrolases superfamily. Adenine deaminase family. Mn(2+) serves as cofactor.

The catalysed reaction is adenine + H2O + H(+) = hypoxanthine + NH4(+). The polypeptide is Adenine deaminase 2 (Desulfotalea psychrophila (strain LSv54 / DSM 12343)).